A 327-amino-acid chain; its full sequence is Biotin synthase (327 aa).

Residues 49 to 282 (FNKDKIDLCS…NKVIRLCGGR (234 aa)) enclose the Radical SAM core domain. Positions 67, 71, and 74 each coordinate [4Fe-4S] cluster. Serine 110, cysteine 142, cysteine 201, and arginine 277 together coordinate [2Fe-2S] cluster.

The protein belongs to the radical SAM superfamily. Biotin synthase family. As to quaternary structure, homodimer. It depends on [4Fe-4S] cluster as a cofactor. Requires [2Fe-2S] cluster as cofactor.

The enzyme catalyses (4R,5S)-dethiobiotin + (sulfur carrier)-SH + 2 reduced [2Fe-2S]-[ferredoxin] + 2 S-adenosyl-L-methionine = (sulfur carrier)-H + biotin + 2 5'-deoxyadenosine + 2 L-methionine + 2 oxidized [2Fe-2S]-[ferredoxin]. The protein operates within cofactor biosynthesis; biotin biosynthesis; biotin from 7,8-diaminononanoate: step 2/2. Catalyzes the conversion of dethiobiotin (DTB) to biotin by the insertion of a sulfur atom into dethiobiotin via a radical-based mechanism. This chain is Biotin synthase, found in Methanococcus maripaludis (strain C5 / ATCC BAA-1333).